The chain runs to 602 residues: Elongation factor 4 (602 aa).

In terms of domain architecture, tr-type G spans 7-188 (ENIRNFSIIA…SIIRLVPPPK (182 aa)). GTP is bound by residues 19 to 24 (DHGKST) and 135 to 138 (NKID).

It belongs to the TRAFAC class translation factor GTPase superfamily. Classic translation factor GTPase family. LepA subfamily.

Its subcellular location is the cell inner membrane. It carries out the reaction GTP + H2O = GDP + phosphate + H(+). In terms of biological role, required for accurate and efficient protein synthesis under certain stress conditions. May act as a fidelity factor of the translation reaction, by catalyzing a one-codon backward translocation of tRNAs on improperly translocated ribosomes. Back-translocation proceeds from a post-translocation (POST) complex to a pre-translocation (PRE) complex, thus giving elongation factor G a second chance to translocate the tRNAs correctly. Binds to ribosomes in a GTP-dependent manner. The chain is Elongation factor 4 from Chlamydia trachomatis serovar L2 (strain ATCC VR-902B / DSM 19102 / 434/Bu).